A 601-amino-acid chain; its full sequence is Glutathione-regulated potassium-efflux system protein KefB (601 aa).

Helical transmembrane passes span 4–24 (ADLL…VPLA), 29–49 (IGAV…GLGF), 55–75 (EILH…GLEL), 87–107 (IFGV…GLLM), 111–131 (FLWQ…TAMA), 152–172 (VLLF…LLAG), 177–197 (HFDW…LIGG), 207–227 (FIAA…LVLS), 230–250 (LFMD…GVLL), 262–282 (AIDP…GMSL), 284–304 (LGVL…LVVI), 324–344 (MQFA…FSTA), and 356–376 (ALLL…MKGI). The 120-residue stretch at 400-519 (KPQVVVVGFG…AGVTQFSRET (120 aa)) folds into the RCK N-terminal domain.

The protein belongs to the monovalent cation:proton antiporter 2 (CPA2) transporter (TC 2.A.37) family. KefB subfamily. In terms of assembly, interacts with the regulatory subunit KefG.

It localises to the cell inner membrane. Functionally, pore-forming subunit of a potassium efflux system that confers protection against electrophiles. Catalyzes K(+)/H(+) antiport. This chain is Glutathione-regulated potassium-efflux system protein KefB, found in Salmonella typhi.